The sequence spans 249 residues: Triosephosphate isomerase (249 aa).

2 residues coordinate substrate: asparagine 12 and lysine 14. Lysine 14 carries the N6-acetyllysine modification. Tyrosine 68 bears the 3'-nitrotyrosine mark. Serine 80 is modified (phosphoserine). The Electrophile role is filled by histidine 96. Serine 106 carries the post-translational modification Phosphoserine. A Glycyl lysine isopeptide (Lys-Gly) (interchain with G-Cter in SUMO1) cross-link involves residue lysine 142. Lysine 149 is modified (N6-succinyllysine). Residue lysine 156 is modified to N6-acetyllysine; alternate. Lysine 156 bears the N6-succinyllysine; alternate mark. Serine 159 is modified (phosphoserine). Glutamate 166 serves as the catalytic Proton acceptor. Threonine 173 is subject to Phosphothreonine. N6-acetyllysine; alternate is present on lysine 194. Lysine 194 carries the N6-succinyllysine; alternate modification. The residue at position 194 (lysine 194) is an N6-methyllysine; alternate. Serine 198 carries the post-translational modification Phosphoserine. Tyrosine 209 carries the post-translational modification 3'-nitrotyrosine. Serine 212 carries the post-translational modification Phosphoserine. Threonine 214 carries the post-translational modification Phosphothreonine. Serine 223 carries the post-translational modification Phosphoserine. Lysine 238 carries the N6-acetyllysine modification.

The protein belongs to the triosephosphate isomerase family. In terms of assembly, homodimer.

The protein resides in the cytoplasm. The catalysed reaction is dihydroxyacetone phosphate = methylglyoxal + phosphate. It carries out the reaction D-glyceraldehyde 3-phosphate = dihydroxyacetone phosphate. It functions in the pathway carbohydrate degradation; glycolysis; D-glyceraldehyde 3-phosphate from glycerone phosphate: step 1/1. It participates in carbohydrate biosynthesis; gluconeogenesis. In terms of biological role, triosephosphate isomerase is an extremely efficient metabolic enzyme that catalyzes the interconversion between dihydroxyacetone phosphate (DHAP) and D-glyceraldehyde-3-phosphate (G3P) in glycolysis and gluconeogenesis. Its function is as follows. It is also responsible for the non-negligible production of methylglyoxal a reactive cytotoxic side-product that modifies and can alter proteins, DNA and lipids. The protein is Triosephosphate isomerase (TPI1) of Macaca fascicularis (Crab-eating macaque).